A 1483-amino-acid polypeptide reads, in one-letter code: MMFGNLPDVRKPKEGYKKYLEYFDLRFPRIQEEKHFQSYYYYTYLKQIRISIIFLTSVLFIGTMTAYISPLDISYLPYYDSKNIYYFNYVQPNVTTTSSSTTTTSSTTNSIDSTVENNNFTEADGHLTNYYFPYLANKARDTFILRMITIGLLLFYFIFTFTAKFKRLWKLFTTITLFLVSCIVLIFESDIRTIPGRMVLLFIIIAISSGMTFLPSMLASGGLCLFFFFYFMFYSQIAGKQMVLLSLVLLISWIILMIISRFKEQLFRDKFRTLENLKIQTIRSEKIINQMLPTVVVQRLRLQSSKDQSLETTLENDKELSIKKDEESNLTGKKQSKVVVSPPPPPTAAAPQQQDNEISTPQNSRKIVDPQSPSSLMPGQYSVTDLIVDSYDPVTVLFCEIVNFNALVEKMSSTQVINLLNEVYNSFDRLTDVYGVTKVEHIGNVYMVVGGCPELCPDHAQRVAHMSLGMLSVIRRFGIVQVRIGMHTGPVVGGIIGKKKLSWHLFGDTINTSSRMASHSSIGRIQVSHPVQQLLRPYFLFEDRGKIQVKGKGLMRTFYLVKTKQLDKRYTSIFSSLHREKPYIPPVDISEVSFENQNNTIGKGDDIASGSATGPTHPNIPNSMLSAIPSRVSIEMNPLGGSGSIQKRERKGSIFANVMPPKVLNFLQTGSLTSPQQQPLPQQSNSEETISNSPRLSSTPQSTSTLQHSSSTGALGSLINNNNNNNNNNNNNNNNNNNNNNNNNNNNNNNNNNNNNNNNNNNNNNLPVSLISPISQNTTPTGSLSLPVTEKKKQTVQFGSISRSSSISKGTVGRSPSPALFDGGIEMDDNGGGAGDDFNTMEPNLDLGKGIHGSNVISTNNSKLNKLEKDLTKHYTLDKFKLSFISRGNLVEKEYRNEYILKNWNRILASMLMIVALFGLSGLVDYFFLKLSSISSIVKVEPMPSSSSSSLSSSSSNSMTSSEEKFITLHTIRSEENLIYDIITGVRYGFVFFCLIVIYVVSKFKTFSIRKWIQEVVMVFFIVLAAVLIVLTSVPPLNKIPLDSVILSIEIMFITICYNFSGIKFWYSNIVCAFCIIFIEISKTWKQAYHSRDIYLSHNYYLITAVLINIITSYFEELFNRLNWVHGRLLDKDQRETESLVAEILPADIVKSMKSGRQLIVDEFKNVTIFLSDIVGFTEMAARMSPRQLVETLNQIYSTFDEIAQEFGVLKIATIGDAYFCVSGCPDKDQTDHAFRVANMAIKMLESIKSIRTVDNIPIRMRIGIHTGPVIAGVVGIKMIHYQLWGESVQITQQMESTSRADMIHVSEDTFNILKSKYLFEERPDGIIKKRKIKTYFLLRALTENDPQPEVKTRSVSVSKSNFGGSLQYNQITPTLNLPVSQLIIKDQNEIKNQNDHDNDDENGNENGNESSSSNINEEEEDDDNSNNNNNNEDDESSYEDDQEMNQYLNNSENNKNNNNNSNQINEEDGNWAKNYDGSSESS.

A run of 6 helical transmembrane segments spans residues 50 to 70 (ISII…YISP), 143 to 163 (FILR…TFTA), 168 to 188 (LWKL…LIFE), 198 to 218 (MVLL…PSML), 219 to 239 (ASGG…QIAG), and 242 to 262 (MVLL…ISRF). The tract at residues 323 to 376 (KKDEESNLTGKKQSKVVVSPPPPPTAAAPQQQDNEISTPQNSRKIVDPQSPSSL) is disordered. Over residues 355–376 (DNEISTPQNSRKIVDPQSPSSL) the composition is skewed to polar residues. One can recognise a Guanylate cyclase 1 domain in the interval 395-517 (TVLFCEIVNF…DTINTSSRMA (123 aa)). Disordered stretches follow at residues 598–619 (NNTI…THPN) and 672–838 (LTSP…GDDF). Polar residues predominate over residues 610 to 619 (GSATGPTHPN). 3 stretches are compositionally biased toward low complexity: residues 672–684 (LTSP…PQQS), 693–712 (SPRL…SSST), and 720–765 (NNNN…NNNN). Polar residues predominate over residues 772-786 (SPISQNTTPTGSLSL). The next 6 helical transmembrane spans lie at 907 to 927 (ILAS…VDYF), 982 to 1002 (IITG…YVVS), 1016 to 1036 (VVMV…SVPP), 1040 to 1060 (IPLD…CYNF), 1061 to 1081 (SGIK…FIEI), and 1094 to 1114 (IYLS…ITSY). The Guanylate cyclase 2 domain occupies 1168 to 1296 (TIFLSDIVGF…ESVQITQQME (129 aa)). Mg(2+) contacts are provided by D1173, I1174, and D1217. Disordered stretches follow at residues 1348–1369 (QPEV…SLQY) and 1393–1483 (NQND…SESS). Residues 1354–1369 (RSVSVSKSNFGGSLQY) show a composition bias toward polar residues. Low complexity predominate over residues 1405 to 1416 (NENGNESSSSNI). Over residues 1432–1444 (NEDDESSYEDDQE) the composition is skewed to acidic residues. A compositionally biased stretch (low complexity) spans 1446–1465 (NQYLNNSENNKNNNNNSNQI).

Belongs to the adenylyl cyclase class-4/guanylyl cyclase family. As to quaternary structure, homodimer. Mg(2+) is required as a cofactor.

The protein localises to the membrane. It carries out the reaction GTP = 3',5'-cyclic GMP + diphosphate. With respect to regulation, activated by guanosine 5'-3-O-(thio)triphosphate (GTPgammaS). Inhibited by calcium. Synthesizes cyclic GMP (cGMP) from GTP, after activation by heterotrimeric or monomeric G proteins. Involved in chemotaxis. The sequence is that of Guanylyl cyclase, membrane (gca) from Dictyostelium discoideum (Social amoeba).